Consider the following 996-residue polypeptide: Poly [ADP-ribose] polymerase (996 aa).

Residues Met1–Leu369 mediate DNA binding. PARP-type zinc fingers lie at residues Phe7 to Thr89 and Phe114 to Lys203. Residues Cys19, Cys22, His51, Cys54, Cys126, Cys129, His161, and Cys164 each coordinate Zn(2+). Short sequence motifs (nuclear localization signal) lie at residues Lys211–Lys214 and Lys232–Lys235. Positions Glu220–Pro358 constitute a PADR1 zinc-binding domain. Residues Gly286 to Ser329 form a zinc ribbon region. Cys291, Cys294, Cys308, and Cys318 together coordinate Zn(2+). The segment at Lys370–Ser507 is automodification domain. The 92-residue stretch at Arg382–Met473 folds into the BRCT domain. The WGR domain occupies Val527 to Met625. A PARP alpha-helical domain is found at Lys647–Gln764. The 224-residue stretch at Asn773–Lys996 folds into the PARP catalytic domain.

This sequence belongs to the ARTD/PARP family.

The protein resides in the nucleus. The catalysed reaction is NAD(+) + (ADP-D-ribosyl)n-acceptor = nicotinamide + (ADP-D-ribosyl)n+1-acceptor + H(+).. The enzyme catalyses L-aspartyl-[protein] + NAD(+) = 4-O-(ADP-D-ribosyl)-L-aspartyl-[protein] + nicotinamide. It catalyses the reaction L-glutamyl-[protein] + NAD(+) = 5-O-(ADP-D-ribosyl)-L-glutamyl-[protein] + nicotinamide. In terms of biological role, poly-ADP-ribosyltransferase that mediates poly-ADP-ribosylation of proteins and plays a key role in DNA repair. Mainly mediates glutamate and aspartate ADP-ribosylation of target proteins: the ADP-D-ribosyl group of NAD(+) is transferred to the acceptor carboxyl group of glutamate and aspartate residues and further ADP-ribosyl groups are transferred to the 2'-position of the terminal adenosine moiety, building up a polymer with an average chain length of 20-30 units. The polypeptide is Poly [ADP-ribose] polymerase (Sarcophaga peregrina (Flesh fly)).